The sequence spans 316 residues: Methionyl-tRNA formyltransferase (316 aa).

111 to 114 is a (6S)-5,6,7,8-tetrahydrofolate binding site; sequence SLLP.

It belongs to the Fmt family.

The enzyme catalyses L-methionyl-tRNA(fMet) + (6R)-10-formyltetrahydrofolate = N-formyl-L-methionyl-tRNA(fMet) + (6S)-5,6,7,8-tetrahydrofolate + H(+). Attaches a formyl group to the free amino group of methionyl-tRNA(fMet). The formyl group appears to play a dual role in the initiator identity of N-formylmethionyl-tRNA by promoting its recognition by IF2 and preventing the misappropriation of this tRNA by the elongation apparatus. The polypeptide is Methionyl-tRNA formyltransferase (Limosilactobacillus fermentum (strain NBRC 3956 / LMG 18251) (Lactobacillus fermentum)).